Here is a 232-residue protein sequence, read N- to C-terminus: Aspartate/glutamate leucyltransferase (232 aa).

The protein belongs to the R-transferase family. Bpt subfamily.

The protein resides in the cytoplasm. The enzyme catalyses N-terminal L-glutamyl-[protein] + L-leucyl-tRNA(Leu) = N-terminal L-leucyl-L-glutamyl-[protein] + tRNA(Leu) + H(+). It carries out the reaction N-terminal L-aspartyl-[protein] + L-leucyl-tRNA(Leu) = N-terminal L-leucyl-L-aspartyl-[protein] + tRNA(Leu) + H(+). Its function is as follows. Functions in the N-end rule pathway of protein degradation where it conjugates Leu from its aminoacyl-tRNA to the N-termini of proteins containing an N-terminal aspartate or glutamate. This Vibrio vulnificus (strain YJ016) protein is Aspartate/glutamate leucyltransferase.